Reading from the N-terminus, the 64-residue chain is Large ribosomal subunit protein bL35 (64 aa).

This sequence belongs to the bacterial ribosomal protein bL35 family.

In Ureaplasma parvum serovar 3 (strain ATCC 27815 / 27 / NCTC 11736), this protein is Large ribosomal subunit protein bL35.